Here is a 225-residue protein sequence, read N- to C-terminus: MMYHIPGVLSPQDVARFREHLEQAEWVDGRVTTGAQGAQVKNNQQVDTRSALYAALQNEVLNAVNQHALFFAAALPRTLSTPLFNRYQNNETYGFHVDGAVRSHPQNGWMRTDLSATLFLSDPESYDGGELVVNDTFGQHRVKLPAGDLVLYPSSSLHCVTPVTRGVRVASFMWIQSMIRDDKKRAMLFELDNNIQSLKSHYGESEEILSLLNLYHNLLREWSEI.

The Fe2OG dioxygenase domain maps to 78–177; the sequence is TLSTPLFNRY…RVASFMWIQS (100 aa). Fe cation-binding residues include His-96, Asp-98, and His-158. Residue Arg-168 participates in 2-oxoglutarate binding.

Fe(2+) serves as cofactor. L-ascorbate is required as a cofactor.

The chain is PKHD-type hydroxylase YbiX from Escherichia coli O6:H1 (strain CFT073 / ATCC 700928 / UPEC).